The sequence spans 329 residues: Probable carboxylesterase 8 (329 aa).

The Involved in the stabilization of the negatively charged intermediate by the formation of the oxyanion hole motif lies at 73-75; the sequence is HGG. Active-site residues include Ser-161, Asp-264, and His-294.

This sequence belongs to the 'GDXG' lipolytic enzyme family. As to expression, expressed in leaves, stems, flowers and siliques.

It catalyses the reaction a carboxylic ester + H2O = an alcohol + a carboxylate + H(+). In terms of biological role, carboxylesterase acting on esters with varying acyl chain length. The protein is Probable carboxylesterase 8 (CXE8) of Arabidopsis thaliana (Mouse-ear cress).